The primary structure comprises 155 residues: Small ribosomal subunit protein uS7 (155 aa).

This sequence belongs to the universal ribosomal protein uS7 family. Part of the 30S ribosomal subunit. Contacts proteins S9 and S11.

One of the primary rRNA binding proteins, it binds directly to 16S rRNA where it nucleates assembly of the head domain of the 30S subunit. Is located at the subunit interface close to the decoding center, probably blocks exit of the E-site tRNA. The protein is Small ribosomal subunit protein uS7 of Thermotoga neapolitana (strain ATCC 49049 / DSM 4359 / NBRC 107923 / NS-E).